A 180-amino-acid chain; its full sequence is Peroxisome assembly protein 22 (180 aa).

A helical transmembrane segment spans residues Leu-15–Tyr-32.

The protein belongs to the peroxin-22 family.

It localises to the peroxisome membrane. Functionally, involved in peroxisome biogenesis. In Saccharomyces cerevisiae (strain ATCC 204508 / S288c) (Baker's yeast), this protein is Peroxisome assembly protein 22 (PEX22).